Reading from the N-terminus, the 483-residue chain is 6-phosphogluconate dehydrogenase, decarboxylating (483 aa).

NADP(+) is bound by residues 10–15 (GLAVMG) and 33–35 (NRT). At lysine 38 the chain carries N6-acetyllysine. Residue serine 57 is modified to Phosphoserine. Lysine 59 carries the N6-acetyllysine modification. Residues 75 to 77 (VKA) and asparagine 103 each bind NADP(+). Substrate contacts are provided by residues asparagine 103 and 129 to 131 (SGG). Serine 129 is modified (phosphoserine). The active-site Proton acceptor is lysine 184. 187-188 (HN) is a binding site for substrate. The active-site Proton donor is the glutamate 191. Residues tyrosine 192, lysine 261, arginine 288, arginine 447, and histidine 453 each coordinate substrate. 478–481 (SSSY) lines the NADP(+) pocket.

It belongs to the 6-phosphogluconate dehydrogenase family. Homodimer.

It is found in the cytoplasm. It carries out the reaction 6-phospho-D-gluconate + NADP(+) = D-ribulose 5-phosphate + CO2 + NADPH. Its pathway is carbohydrate degradation; pentose phosphate pathway; D-ribulose 5-phosphate from D-glucose 6-phosphate (oxidative stage): step 3/3. In terms of biological role, catalyzes the oxidative decarboxylation of 6-phosphogluconate to ribulose 5-phosphate and CO(2), with concomitant reduction of NADP to NADPH. The chain is 6-phosphogluconate dehydrogenase, decarboxylating from Rattus norvegicus (Rat).